The sequence spans 621 residues: Alpha-actinin-like protein 1 (621 aa).

2 consecutive Calponin-homology (CH) domains span residues 8 to 114 and 123 to 230; these read SVQN…LRFT and LTAK…HAFS. The interval 86-110 is actin-binding; it reads LTNIGPADIVDGNLKLILGLIWTLI. 3 consecutive EF-hand domains span residues 388–419, 487–549, and 550–618; these read LSTI…LGPL, DGIT…EIVM, and EELE…AEDK.

The protein belongs to the alpha-actinin family.

It localises to the cytoplasm. It is found in the cytoskeleton. In terms of biological role, binds to actin and is involved in actin-ring formation and organization. Plays a role in cytokinesis and is involved in septation. The sequence is that of Alpha-actinin-like protein 1 (ain1) from Schizosaccharomyces pombe (strain 972 / ATCC 24843) (Fission yeast).